The following is a 424-amino-acid chain: Cyclin-dependent kinase D-1 (424 aa).

The Protein kinase domain maps to 19–299 (YLKREVLGEG…AQQALEHRYF (281 aa)). ATP is bound by residues 25–33 (LGEGTYGVV) and Lys-48. Residue Thr-29 is modified to Phosphothreonine. Residue Tyr-30 is modified to Phosphotyrosine. Catalysis depends on Asp-141, which acts as the Proton acceptor. Residue Ser-168 is modified to Phosphoserine. The residue at position 174 (Thr-174) is a Phosphothreonine. 2 disordered regions span residues 303 to 337 (PAPTKPSQLPRPPPKGDSGNNKIPDLNLQDGPVVL) and 359 to 424 (ADRT…GYTE). Residues 359–374 (ADRTEEHPSGARHMDD) show a composition bias toward basic and acidic residues.

This sequence belongs to the protein kinase superfamily. CMGC Ser/Thr protein kinase family. CDC2/CDKX subfamily. In terms of assembly, interacts with CYCH1-1. Expressed in actively dividing cells of roots, leaves and shoots. Expressed in the intercalary meristem and the elongation zone of internodes.

It is found in the nucleus. It carries out the reaction L-seryl-[protein] + ATP = O-phospho-L-seryl-[protein] + ADP + H(+). The enzyme catalyses L-threonyl-[protein] + ATP = O-phospho-L-threonyl-[protein] + ADP + H(+). The catalysed reaction is [DNA-directed RNA polymerase] + ATP = phospho-[DNA-directed RNA polymerase] + ADP + H(+). In terms of biological role, CDK-activating kinase that may control G1/S phase progression. May control the rate of cell differentiation to accomplish proper development of organs, or in response to a changing environment. Forms a complex with cyclin CYCH1-1 that phosphorylates CDKA-1 and the C-terminal domain (CTD) of the large subunit of RNA polymerase II. This chain is Cyclin-dependent kinase D-1 (CDKD-1), found in Oryza sativa subsp. japonica (Rice).